Consider the following 450-residue polypeptide: GTPase HflX (450 aa).

Disordered regions lie at residues Thr79–Ala110 and Arg173–Leu196. Over residues Ser178–Ala189 the composition is skewed to gly residues. The region spanning Leu230–Met395 is the Hflx-type G domain. Residues Gly236–Ser243, Phe261–Asp265, Asp283–Gly286, Asn349–Asp352, and Ser373–His375 contribute to the GTP site. Mg(2+) contacts are provided by Ser243 and Thr263.

It belongs to the TRAFAC class OBG-HflX-like GTPase superfamily. HflX GTPase family. In terms of assembly, monomer. Associates with the 50S ribosomal subunit. The cofactor is Mg(2+).

Its subcellular location is the cytoplasm. GTPase that associates with the 50S ribosomal subunit and may have a role during protein synthesis or ribosome biogenesis. This is GTPase HflX from Gluconacetobacter diazotrophicus (strain ATCC 49037 / DSM 5601 / CCUG 37298 / CIP 103539 / LMG 7603 / PAl5).